The sequence spans 330 residues: Exostosin-like 2 (330 aa).

Residues 1–21 are Cytoplasmic-facing; it reads MMRGCHICKLPGRVMGIRVLR. A helical; Signal-anchor for type II membrane protein membrane pass occupies residues 22-42; it reads FSLVVILVLLLVAGALTNLLP. At 43–330 the chain is on the lumenal side; the sequence is NIKEDKMLTL…FPYANHKSKM (288 aa). UDP-N-acetyl-alpha-D-galactosamine is bound at residue Gln72. Gln72 is a binding site for UDP-N-acetyl-alpha-D-glucosamine. Residue Asn75 is glycosylated (N-linked (GlcNAc...) asparagine). UDP-N-acetyl-alpha-D-galactosamine-binding residues include Arg76, Asn101, Asn130, Arg135, Asp151, Asp152, Asp153, and Asp245. Residues Arg76, Asn101, Asn130, Arg135, Asp151, Asp152, Asp153, Asp245, Asp246, and Arg293 each contribute to the UDP-N-acetyl-alpha-D-glucosamine site. Mn(2+) is bound at residue Asp153. The cysteines at positions 244 and 296 are disulfide-linked. The active site involves Asp246. Residue Arg293 participates in UDP-N-acetyl-alpha-D-galactosamine binding.

This sequence belongs to the glycosyltransferase 47 family. Mn(2+) is required as a cofactor.

It is found in the endoplasmic reticulum membrane. It carries out the reaction 3-O-(beta-D-GlcA-(1-&gt;3)-beta-D-Gal-(1-&gt;3)-beta-D-Gal-(1-&gt;4)-beta-D-Xyl)-L-seryl-[protein] + UDP-N-acetyl-alpha-D-glucosamine = 3-O-(alpha-D-GlcNAc-(1-&gt;4)-beta-D-GlcA-(1-&gt;3)-beta-D-Gal-(1-&gt;3)-beta-D-Gal-(1-&gt;4)-beta-D-Xyl)-L-seryl-[protein] + UDP + H(+). Glycosyltransferase required for the biosynthesis of heparan-sulfate and responsible for the alternating addition of beta-1-4-linked glucuronic acid (GlcA) and alpha-1-4-linked N-acetylglucosamine (GlcNAc) units to nascent heparan sulfate chains. This Mus musculus (Mouse) protein is Exostosin-like 2 (Extl2).